The chain runs to 595 residues: Acriflavine sensitivity control protein acr-2 (595 aa).

The zn(2)-C6 fungal-type DNA-binding region spans 22–49 (CYNCHRKRLRCDKSLPACLKCSINGEEC). The span at 69-88 (TTRTTNKTNFNGTNTTTPRT) shows a compositional bias: low complexity. The tract at residues 69–172 (TTRTTNKTNF…PDDNPDPSSQ (104 aa)) is disordered. Positions 89 to 117 (VKSSTPTQAPTPSDSPRQLDTDVTSSSAP) are enriched in polar residues. The span at 118–138 (SHTCSRSTTTSTTTTRISSPT) shows a compositional bias: low complexity.

It localises to the nucleus. In terms of biological role, probable transcriptional regulator. The polypeptide is Acriflavine sensitivity control protein acr-2 (acr-2) (Neurospora crassa (strain ATCC 24698 / 74-OR23-1A / CBS 708.71 / DSM 1257 / FGSC 987)).